Here is a 209-residue protein sequence, read N- to C-terminus: Large ribosomal subunit protein uL3 (209 aa).

The interval 126 to 165 (HNFGGGSRTHGQSDRLRAPGSVGGSSDPSRTFRGTRMAGR) is disordered.

The protein belongs to the universal ribosomal protein uL3 family. As to quaternary structure, part of the 50S ribosomal subunit. Forms a cluster with proteins L14 and L19.

Functionally, one of the primary rRNA binding proteins, it binds directly near the 3'-end of the 23S rRNA, where it nucleates assembly of the 50S subunit. This Chlorobium limicola (strain DSM 245 / NBRC 103803 / 6330) protein is Large ribosomal subunit protein uL3.